Consider the following 740-residue polypeptide: Catalase-peroxidase (740 aa).

Positions 102–229 form a cross-link, tryptophyl-tyrosyl-methioninium (Trp-Tyr) (with M-256); that stretch reads WHAAGTYRTG…LAAIQMGLIY (128 aa). His103 serves as the catalytic Proton acceptor. The disordered stretch occupies residues 111 to 130; the sequence is GDGRGGSSSGQQRFAPLNSW. The tryptophyl-tyrosyl-methioninium (Tyr-Met) (with W-102) cross-link spans 229 to 256; the sequence is YVNPEGPGGDPHDPEGMARDMRETFARM. His271 provides a ligand contact to heme b.

Belongs to the peroxidase family. Peroxidase/catalase subfamily. Homodimer or homotetramer. Heme b is required as a cofactor. Post-translationally, formation of the three residue Trp-Tyr-Met cross-link is important for the catalase, but not the peroxidase activity of the enzyme.

The catalysed reaction is H2O2 + AH2 = A + 2 H2O. The enzyme catalyses 2 H2O2 = O2 + 2 H2O. Its function is as follows. Bifunctional enzyme with both catalase and broad-spectrum peroxidase activity. In Erythrobacter litoralis (strain HTCC2594), this protein is Catalase-peroxidase.